A 51-amino-acid polypeptide reads, in one-letter code: Conotoxin Cal6.33 (51 aa).

The signal sequence occupies residues 1 to 22 (MKLTCVVIIAVLILTACQFTTA). 3 disulfides stabilise this stretch: Cys-25/Cys-39, Cys-32/Cys-43, and Cys-38/Cys-50.

This sequence belongs to the conotoxin O1 superfamily. Expressed by the venom duct.

Its subcellular location is the secreted. Probable neurotoxin. This chain is Conotoxin Cal6.33, found in Californiconus californicus (California cone).